The following is a 412-amino-acid chain: Putative competence-damage inducible protein (412 aa).

The protein belongs to the CinA family.

The sequence is that of Putative competence-damage inducible protein from Bacillus cereus (strain ATCC 10987 / NRS 248).